The chain runs to 483 residues: Glutarate-semialdehyde dehydrogenase (483 aa).

NADP(+) is bound by residues 156–157 (WN), 180–183 (KPAS), and 233–234 (GS). The active-site Proton acceptor is glutamate 255. Leucine 256 serves as a coordination point for NADP(+). Cysteine 289 functions as the Nucleophile in the catalytic mechanism. Residue glutamate 386 participates in NADP(+) binding.

It belongs to the aldehyde dehydrogenase family.

The catalysed reaction is 5-oxopentanoate + NADP(+) + H2O = glutarate + NADPH + 2 H(+). It functions in the pathway amino-acid degradation. Catalyzes the conversion of 5-oxopentanoate (glutarate semialdehyde) to glutarate. Involved in L-lysine degradation. In Pseudomonas aeruginosa (strain ATCC 15692 / DSM 22644 / CIP 104116 / JCM 14847 / LMG 12228 / 1C / PRS 101 / PAO1), this protein is Glutarate-semialdehyde dehydrogenase.